The sequence spans 320 residues: 3-O-acetylpapaveroxine carboxylesterase CXE1 (320 aa).

The Involved in the stabilization of the negatively charged intermediate by the formation of the oxyanion hole signature appears at 72 to 74; the sequence is HGG. Catalysis depends on residues S158, D262, and H292.

This sequence belongs to the 'GDXG' lipolytic enzyme family.

The enzyme catalyses 3-O-acetylpapaveroxine + H2O = narcotine hemiacetal + acetate + H(+). Its pathway is alkaloid biosynthesis. Carboxylesterase involved in the biosynthesis of the benzylisoquinoline alkaloid noscapine. Converts 3-O-acetylpapaveroxine to papaveroxine which spontaneously rearranges to narcotine hemiacetal. The polypeptide is 3-O-acetylpapaveroxine carboxylesterase CXE1 (Papaver somniferum (Opium poppy)).